We begin with the raw amino-acid sequence, 391 residues long: ATP phosphoribosyltransferase regulatory subunit (391 aa).

It belongs to the class-II aminoacyl-tRNA synthetase family. HisZ subfamily. In terms of assembly, heteromultimer composed of HisG and HisZ subunits.

It localises to the cytoplasm. It functions in the pathway amino-acid biosynthesis; L-histidine biosynthesis; L-histidine from 5-phospho-alpha-D-ribose 1-diphosphate: step 1/9. In terms of biological role, required for the first step of histidine biosynthesis. May allow the feedback regulation of ATP phosphoribosyltransferase activity by histidine. This chain is ATP phosphoribosyltransferase regulatory subunit, found in Prochlorococcus marinus (strain NATL1A).